The following is a 1023-amino-acid chain: Protein FAM13A (1023 aa).

In terms of domain architecture, Rho-GAP spans 43-231 (VSLQELERQG…KILENYNTLF (189 aa)). The segment at 269 to 290 (LERDMPKPPPKTKIPKSRSEGS) is disordered. Ser345 carries the post-translational modification Phosphoserine. Disordered stretches follow at residues 381 to 437 (VNNS…SGFN) and 459 to 562 (CAGE…EVPQ). The span at 384–405 (SGGQSSEDSESGTLSASSATSA) shows a compositional bias: low complexity. 2 stretches are compositionally biased toward basic and acidic residues: residues 412–427 (SKEQDEVRHGRDKGLI) and 509–524 (SDERKGNEKDGGHTQH). The segment covering 536–549 (PSLSDTKQQRNQDA) has biased composition (polar residues). Ser597 and Ser617 each carry phosphoserine. 2 disordered regions span residues 628 to 663 (QYLDDTEVPPSPPNSHSFMRRRSSSLGSYDDEQEDL) and 726 to 759 (ISEEDLTPRMRQRSNTLPKSFGSQLEKEDEKKQE). Residues 666 to 730 (AQLTRRIQSL…ESKLKISEED (65 aa)) adopt a coiled-coil conformation. Position 727 is a phosphoserine (Ser727). Position 732 is a phosphothreonine (Thr732). Residues 738 to 748 (RSNTLPKSFGS) are compositionally biased toward polar residues. The span at 750-759 (LEKEDEKKQE) shows a compositional bias: basic and acidic residues. Positions 946-978 (ASIPELLEHLQEMREEKKRIRKKLRDFEDNFFR) form a coiled coil.

Belongs to the FAM13 family. Isoform 1 is widely expressed, with highest expression in skeletal muscle, thymus, brain and lung. Isoform 3 is less abundant than isoform 1 and predominantly expressed in kidney, pancreas, liver, lung and thymus.

This is Protein FAM13A (FAM13A) from Homo sapiens (Human).